The sequence spans 891 residues: Protein translocase subunit SecA (891 aa).

Residues Gln-83, 101 to 105, and Asp-489 each bind ATP; that span reads GEGKT.

This sequence belongs to the SecA family.

The protein resides in the plastid. It localises to the chloroplast stroma. Its subcellular location is the chloroplast thylakoid membrane. It catalyses the reaction ATP + H2O + cellular proteinSide 1 = ADP + phosphate + cellular proteinSide 2.. Has a central role in coupling the hydrolysis of ATP to the transfer of proteins across the thylakoid membrane. This chain is Protein translocase subunit SecA, found in Diacronema lutheri (Unicellular marine alga).